Consider the following 317-residue polypeptide: Egg-laying defective protein 26 (317 aa).

Residues 156 to 277 enclose the LRAT domain; the sequence is EVNVSGVKFY…CSTGVPFSYD (122 aa). Catalysis depends on residues His-166 and His-178. The Acyl-thioester intermediate role is filled by Cys-261.

Highly expressed in the cells of the spermatheca, the mouth, and the lining of the pharynx, the rectum, and the excretory canal. Also expressed in the pharyngeal intestinal junction cell.

It localises to the apical cell membrane. Its function is as follows. Putative acyltransferase. Plays a role in the morphogenesis of a vulval toroid cell, vulF, which is located where the vulva and the uterus connect. Not required for specifying vulval cell fate. This chain is Egg-laying defective protein 26, found in Caenorhabditis elegans.